The following is a 252-amino-acid chain: Carbohydrate deacetylase (252 aa).

His-59 and His-122 together coordinate Mg(2+).

Belongs to the YdjC deacetylase family. Homodimer. Mg(2+) serves as cofactor.

Its function is as follows. Probably catalyzes the deacetylation of acetylated carbohydrates an important step in the degradation of oligosaccharides. In Vibrio vulnificus (strain YJ016), this protein is Carbohydrate deacetylase.